The following is a 324-amino-acid chain: Phospho-N-acetylmuramoyl-pentapeptide-transferase (324 aa).

10 consecutive transmembrane segments (helical) span residues 9 to 29 (TFAV…PFLV), 53 to 73 (TMGA…FSFI), 77 to 97 (VSAA…LGFL), 117 to 137 (FLGQ…SDFA), 149 to 169 (IDLG…FSNA), 176 to 196 (LDGL…VIAF), 201 to 221 (MDVA…LLFN), 227 to 247 (IFMG…VSIL), 253 to 273 (LLLL…LQVF), and 304 to 324 (VLTF…VVIF).

This sequence belongs to the glycosyltransferase 4 family. MraY subfamily. Mg(2+) serves as cofactor.

Its subcellular location is the cell membrane. It catalyses the reaction UDP-N-acetyl-alpha-D-muramoyl-L-alanyl-gamma-D-glutamyl-meso-2,6-diaminopimeloyl-D-alanyl-D-alanine + di-trans,octa-cis-undecaprenyl phosphate = di-trans,octa-cis-undecaprenyl diphospho-N-acetyl-alpha-D-muramoyl-L-alanyl-D-glutamyl-meso-2,6-diaminopimeloyl-D-alanyl-D-alanine + UMP. The protein operates within cell wall biogenesis; peptidoglycan biosynthesis. Functionally, catalyzes the initial step of the lipid cycle reactions in the biosynthesis of the cell wall peptidoglycan: transfers peptidoglycan precursor phospho-MurNAc-pentapeptide from UDP-MurNAc-pentapeptide onto the lipid carrier undecaprenyl phosphate, yielding undecaprenyl-pyrophosphoryl-MurNAc-pentapeptide, known as lipid I. This Listeria innocua serovar 6a (strain ATCC BAA-680 / CLIP 11262) protein is Phospho-N-acetylmuramoyl-pentapeptide-transferase.